The primary structure comprises 231 residues: Transmembrane gamma-carboxyglutamic acid protein 3 (231 aa).

The propeptide occupies 1–19 (MAVFLEAKNAHAVLKRFPR). Positions 20 to 65 (ANEFLEELRQGTIERECMEEICSYEEVKEVFENKEKTMEFWKGYPN) constitute a Gla domain. Over 20 to 78 (ANEFLEELRQGTIERECMEEICSYEEVKEVFENKEKTMEFWKGYPNAVYSVRDPSQSSD) the chain is Extracellular. 13 positions are modified to 4-carboxyglutamate: glutamate 22, glutamate 25, glutamate 26, glutamate 33, glutamate 35, glutamate 38, glutamate 39, glutamate 44, glutamate 45, glutamate 48, glutamate 51, glutamate 54, and glutamate 58. Cysteine 36 and cysteine 41 form a disulfide bridge. Residues 79-101 (AMYVVVPLLGVVLLIVIALFIIW) traverse the membrane as a helical segment. The Cytoplasmic segment spans residues 102 to 231 (RCQLQKATRH…IVAASPSADK (130 aa)). Disordered stretches follow at residues 140–165 (HSQGESSGHREAGNNPQIVMGPSRGG) and 184–231 (RLSS…SADK). Residues 201–212 (QEGSSEEASVSY) are compositionally biased toward polar residues.

Post-translationally, gla residues are produced after subsequent post-translational modifications of glutamate by a vitamin K-dependent gamma-carboxylase.

Its subcellular location is the membrane. The chain is Transmembrane gamma-carboxyglutamic acid protein 3 (Prrg3) from Mus musculus (Mouse).